We begin with the raw amino-acid sequence, 563 residues long: Probable tRNA (uracil-O(2)-)-methyltransferase (563 aa).

The C3H1-type zinc finger occupies 536–563; it reads TIRKAPCWMSLHHPDGCPVGQEACRYEH.

The protein belongs to the TRM44 family.

It is found in the cytoplasm. It carries out the reaction uridine(44) in tRNA(Ser) + S-adenosyl-L-methionine = 2'-O-methyluridine(44) in tRNA(Ser) + S-adenosyl-L-homocysteine + H(+). In terms of biological role, probable adenosyl-L-methionine (AdoMet)-dependent tRNA (uracil-O(2)-)-methyltransferase. The sequence is that of Probable tRNA (uracil-O(2)-)-methyltransferase from Caenorhabditis elegans.